The sequence spans 1265 residues: Protein FAM193A (1265 aa).

Positions 107–142 form a coiled coil; it reads SEDTYSTLLQRYQRSEEELRRVAEEWLECQKRIDAY. The segment at 247–272 is disordered; sequence APDYLAERSPPSVSSASSGSGSSSPI. The span at 255–271 shows a compositional bias: low complexity; sequence SPPSVSSASSGSGSSSP. S293 bears the Phosphoserine mark. Disordered regions lie at residues 331–407, 553–586, 626–674, 750–785, 822–841, 859–881, and 893–1163; these read NGGG…EQAP, GSEI…SKEK, VQSS…APLP, ENGV…NQKE, LTKR…ERES, ETKP…KLEE, and EHLH…DRVN. Residues 355 to 365 are compositionally biased toward acidic residues; the sequence is EADDEEADGES. The residue at position 383 (S383) is a Phosphoserine. S642 is subject to Phosphoserine. The segment covering 757–769 has biased composition (acidic residues); that stretch reads QQDDGDESADEDS. Residues 772–781 are compositionally biased toward low complexity; sequence EHSSSTSTST. Positions 868–877 are enriched in basic residues; sequence AAKRARHKQR. Residues 873–932 are a coiled coil; sequence RHKQRKLEEKARLEAEARAREHLHLQEEQRRREEEEDEEEEEDRFKEEFQRLQELQKLRA. 2 stretches are compositionally biased toward basic and acidic residues: residues 893–905 and 915–929; these read EHLH…RRRE and DRFK…ELQK. A compositionally biased stretch (basic residues) spans 931–940; that stretch reads RAVKKKKKER. The span at 953–973 shows a compositional bias: polar residues; that stretch reads RNFQAATESVPNSGNIHNGSL. A coiled-coil region spans residues 1093–1118; that stretch reads TEQKREERKVNSNNNNKKQLNHIKDE. S1129 and S1144 each carry phosphoserine. Positions 1149-1159 are enriched in basic residues; it reads GKNKKNKKKKG.

The protein belongs to the FAM193 family.

This is Protein FAM193A (FAM193A) from Homo sapiens (Human).